Reading from the N-terminus, the 65-residue chain is Large ribosomal subunit protein bL35 (65 aa).

It belongs to the bacterial ribosomal protein bL35 family.

This is Large ribosomal subunit protein bL35 from Clostridium botulinum (strain Loch Maree / Type A3).